A 209-amino-acid chain; its full sequence is Phosphopantothenoylcysteine decarboxylase (209 aa).

FMN contacts are provided by residues 28–30 and 53–55; these read GSV and TKS. His90 (proton donor) is an active-site residue. Residues 106-109 and Ala140 contribute to the FMN site; that span reads SANT. N-[(R)-4-phosphopantothenoyl]-L-cysteine is bound by residues Asn142, Arg172, and Ala174. The active-site Proton donor is Cys175. Residue Met183 coordinates N-[(R)-4-phosphopantothenoyl]-L-cysteine.

This sequence belongs to the HFCD (homooligomeric flavin containing Cys decarboxylase) superfamily. As to quaternary structure, homotrimer. Requires FMN as cofactor. Expressed in roots, shoots, leaves, flowers, developing siliques and seeds with highest expression in seed embryos and phloem.

It carries out the reaction N-[(R)-4-phosphopantothenoyl]-L-cysteine + H(+) = (R)-4'-phosphopantetheine + CO2. The protein operates within cofactor biosynthesis; coenzyme A biosynthesis; CoA from (R)-pantothenate: step 3/5. In terms of biological role, involved in plant growth, and salt and osmotic tolerance. Catalyzes the decarboxylation of 4'-phosphopantothenoylcysteine to 4'-phosphopantetheine, a key step in coenzyme A biosynthesis. The enzyme is also able to decarboxylate pantothenoylcysteine to pantothenoylcysteamine. In Arabidopsis thaliana (Mouse-ear cress), this protein is Phosphopantothenoylcysteine decarboxylase.